A 297-amino-acid chain; its full sequence is tRNA uridine(34) hydroxylase (297 aa).

Residues 133-228 (SGDEVVFFDG…YGETFKDQGL (96 aa)) form the Rhodanese domain. Cysteine 188 acts as the Cysteine persulfide intermediate in catalysis.

Belongs to the TrhO family.

The catalysed reaction is uridine(34) in tRNA + AH2 + O2 = 5-hydroxyuridine(34) in tRNA + A + H2O. In terms of biological role, catalyzes oxygen-dependent 5-hydroxyuridine (ho5U) modification at position 34 in tRNAs. This chain is tRNA uridine(34) hydroxylase, found in Pseudarthrobacter chlorophenolicus (strain ATCC 700700 / DSM 12829 / CIP 107037 / JCM 12360 / KCTC 9906 / NCIMB 13794 / A6) (Arthrobacter chlorophenolicus).